Reading from the N-terminus, the 972-residue chain is Isoleucine--tRNA ligase (972 aa).

A 'HIGH' region motif is present at residues 63 to 73 (PYANGNIHIGH). Residue E603 participates in L-isoleucyl-5'-AMP binding. Residues 644 to 648 (KMSKS) carry the 'KMSKS' region motif. K647 is an ATP binding site.

The protein belongs to the class-I aminoacyl-tRNA synthetase family. IleS type 1 subfamily. As to quaternary structure, monomer.

It is found in the cytoplasm. The enzyme catalyses tRNA(Ile) + L-isoleucine + ATP = L-isoleucyl-tRNA(Ile) + AMP + diphosphate. In terms of biological role, catalyzes the attachment of isoleucine to tRNA(Ile). As IleRS can inadvertently accommodate and process structurally similar amino acids such as valine, to avoid such errors it has two additional distinct tRNA(Ile)-dependent editing activities. One activity is designated as 'pretransfer' editing and involves the hydrolysis of activated Val-AMP. The other activity is designated 'posttransfer' editing and involves deacylation of mischarged Val-tRNA(Ile). In Brucella abortus (strain 2308), this protein is Isoleucine--tRNA ligase.